The following is a 382-amino-acid chain: Dual-specificity RNA methyltransferase RlmN (382 aa).

Glu96 serves as the catalytic Proton acceptor. The Radical SAM core domain maps to 102–342 (QGKRGTLCVS…VRTTRGEDID (241 aa)). The cysteines at positions 109 and 345 are disulfide-linked. Positions 116, 120, and 123 each coordinate [4Fe-4S] cluster. S-adenosyl-L-methionine-binding positions include 170 to 171 (GE), Ser202, 224 to 226 (SLH), and Asn302. Catalysis depends on Cys345, which acts as the S-methylcysteine intermediate.

The protein belongs to the radical SAM superfamily. RlmN family. [4Fe-4S] cluster serves as cofactor.

The protein localises to the cytoplasm. The catalysed reaction is adenosine(2503) in 23S rRNA + 2 reduced [2Fe-2S]-[ferredoxin] + 2 S-adenosyl-L-methionine = 2-methyladenosine(2503) in 23S rRNA + 5'-deoxyadenosine + L-methionine + 2 oxidized [2Fe-2S]-[ferredoxin] + S-adenosyl-L-homocysteine. The enzyme catalyses adenosine(37) in tRNA + 2 reduced [2Fe-2S]-[ferredoxin] + 2 S-adenosyl-L-methionine = 2-methyladenosine(37) in tRNA + 5'-deoxyadenosine + L-methionine + 2 oxidized [2Fe-2S]-[ferredoxin] + S-adenosyl-L-homocysteine. Functionally, specifically methylates position 2 of adenine 2503 in 23S rRNA and position 2 of adenine 37 in tRNAs. m2A2503 modification seems to play a crucial role in the proofreading step occurring at the peptidyl transferase center and thus would serve to optimize ribosomal fidelity. This Pseudomonas savastanoi pv. phaseolicola (strain 1448A / Race 6) (Pseudomonas syringae pv. phaseolicola (strain 1448A / Race 6)) protein is Dual-specificity RNA methyltransferase RlmN.